A 142-amino-acid polypeptide reads, in one-letter code: Matrix protein (142 aa).

In terms of assembly, homooligomer. Forms homotetramers. Interacts with phosphoprotein P. Binds to ssRNA.

The protein resides in the virion. Its subcellular location is the host cytoplasm. It is found in the host cell membrane. The protein localises to the host nucleus. In terms of biological role, plays a crucial role in virion assembly and budding. The sequence is that of Matrix protein (M) from Borna disease virus (strain V) (BDV).